We begin with the raw amino-acid sequence, 350 residues long: Enoyl-[acyl-carrier-protein] reductase, mitochondrial (350 aa).

The transit peptide at 1-14 directs the protein to the mitochondrion; the sequence is MNSTRNIISLVRRY. Tyr-69 (proton donor) is an active-site residue. NADP(+)-binding positions include Asn-143, 169 to 172, 192 to 194, 261 to 264, 286 to 288, and Lys-343; these read NSMV, RDG, YGGM, and FWL.

Belongs to the zinc-containing alcohol dehydrogenase family. Quinone oxidoreductase subfamily. As to quaternary structure, homodimer.

The protein resides in the mitochondrion. The catalysed reaction is a 2,3-saturated acyl-[ACP] + NADP(+) = a (2E)-enoyl-[ACP] + NADPH + H(+). Its function is as follows. Catalyzes the NADPH-dependent reduction of trans-2-enoyl thioesters in mitochondrial fatty acid synthesis (fatty acid synthesis type II). Fatty acid chain elongation in mitochondria uses acyl carrier protein (ACP) as an acyl group carrier, but the enzyme accepts both ACP and CoA thioesters as substrates in vitro. This chain is Enoyl-[acyl-carrier-protein] reductase, mitochondrial (mecr), found in Dictyostelium discoideum (Social amoeba).